The sequence spans 113 residues: U11-theraphotoxin-Hhn1n (113 aa).

A signal peptide spans 1-21 (MNTVRVTFLLVFVLAVSLGQA). The propeptide occupies 22–74 (DKDENRMEMQEKTEQGKSYLDFAENLLLQKLEELEAKLLEEDSEESRNSRQKR). Over residues 60–69 (LEEDSEESRN) the composition is skewed to basic and acidic residues. Residues 60–83 (LEEDSEESRNSRQKRCIGEGVPCD) form a disordered region. 2 disulfide bridges follow: Cys-75/Cys-90 and Cys-89/Cys-110.

Belongs to the neurotoxin 14 (magi-1) family. 01 (HNTX-16) subfamily. Expressed by the venom gland.

The protein localises to the secreted. Probable ion channel inhibitor. This Cyriopagopus hainanus (Chinese bird spider) protein is U11-theraphotoxin-Hhn1n.